We begin with the raw amino-acid sequence, 323 residues long: Dehydrogenase/reductase SDR family member 7B (323 aa).

The Cytoplasmic segment spans residues 1-17 (MISPSFRKGMLKERVMD). Residues 18 to 38 (LASQTTILPLLFGCLGIFSLF) traverse the membrane as a helical; Signal-anchor for type II membrane protein segment. The Lumenal portion of the chain corresponds to 39 to 323 (RLLQRIRSKA…ARKERKSKSS (285 aa)). 2 residues coordinate NAD(+): Ser-62 and Leu-64. Ser-192 lines the substrate pocket. Tyr-205, Lys-209, and Thr-240 together coordinate NAD(+). Tyr-205 functions as the Proton acceptor in the catalytic mechanism.

This sequence belongs to the short-chain dehydrogenases/reductases (SDR) family.

It localises to the endoplasmic reticulum membrane. Putative oxidoreductase. This is Dehydrogenase/reductase SDR family member 7B from Mus musculus (Mouse).